The sequence spans 276 residues: Diaminopimelate epimerase (276 aa).

Substrate is bound by residues Asn-13, Gln-46, and Asn-66. Cys-75 functions as the Proton donor in the catalytic mechanism. Substrate is bound by residues 76–77, Asn-159, Asn-192, and 210–211; these read GN and ER. Cys-219 functions as the Proton acceptor in the catalytic mechanism. 220 to 221 lines the substrate pocket; the sequence is GS.

Belongs to the diaminopimelate epimerase family. As to quaternary structure, homodimer.

Its subcellular location is the cytoplasm. It carries out the reaction (2S,6S)-2,6-diaminopimelate = meso-2,6-diaminopimelate. The protein operates within amino-acid biosynthesis; L-lysine biosynthesis via DAP pathway; DL-2,6-diaminopimelate from LL-2,6-diaminopimelate: step 1/1. Catalyzes the stereoinversion of LL-2,6-diaminopimelate (L,L-DAP) to meso-diaminopimelate (meso-DAP), a precursor of L-lysine and an essential component of the bacterial peptidoglycan. The sequence is that of Diaminopimelate epimerase from Vibrio campbellii (strain ATCC BAA-1116).